Here is a 434-residue protein sequence, read N- to C-terminus: Serine hydroxymethyltransferase (434 aa).

(6S)-5,6,7,8-tetrahydrofolate contacts are provided by residues leucine 133 and glycine 137–leucine 139. Position 242 is an N6-(pyridoxal phosphate)lysine (lysine 242).

It belongs to the SHMT family. As to quaternary structure, homodimer. It depends on pyridoxal 5'-phosphate as a cofactor.

It localises to the cytoplasm. The catalysed reaction is (6R)-5,10-methylene-5,6,7,8-tetrahydrofolate + glycine + H2O = (6S)-5,6,7,8-tetrahydrofolate + L-serine. It participates in one-carbon metabolism; tetrahydrofolate interconversion. It functions in the pathway amino-acid biosynthesis; glycine biosynthesis; glycine from L-serine: step 1/1. Functionally, catalyzes the reversible interconversion of serine and glycine with tetrahydrofolate (THF) serving as the one-carbon carrier. This reaction serves as the major source of one-carbon groups required for the biosynthesis of purines, thymidylate, methionine, and other important biomolecules. Also exhibits THF-independent aldolase activity toward beta-hydroxyamino acids, producing glycine and aldehydes, via a retro-aldol mechanism. This is Serine hydroxymethyltransferase from Caulobacter sp. (strain K31).